The sequence spans 498 residues: L-xylulose/3-keto-L-gulonate kinase (498 aa).

The protein belongs to the FGGY kinase family. Homodimer.

It catalyses the reaction L-xylulose + ATP = L-xylulose 5-phosphate + ADP + H(+). The enzyme catalyses 3-dehydro-L-gulonate + ATP = 3-dehydro-L-gulonate 6-phosphate + ADP + H(+). In terms of biological role, catalyzes the phosphorylation of L-xylulose and 3-keto-L-gulonate. Is involved in L-lyxose utilization via xylulose, and may also be involved in the utilization of 2,3-diketo-L-gulonate. This Escherichia coli (strain K12) protein is L-xylulose/3-keto-L-gulonate kinase (lyx).